A 221-amino-acid polypeptide reads, in one-letter code: Glutathione peroxidase 6 (221 aa).

The first 19 residues, 1–19 (MTQQFWGPCLFSLFMAVLA), serve as a signal peptide directing secretion. Cys73 is a catalytic residue.

This sequence belongs to the glutathione peroxidase family. In terms of tissue distribution, expressed in the Bowman glands.

It localises to the secreted. The enzyme catalyses 2 glutathione + H2O2 = glutathione disulfide + 2 H2O. The sequence is that of Glutathione peroxidase 6 (Gpx6) from Rattus norvegicus (Rat).